The sequence spans 425 residues: Divalent metal cation transporter MntH (425 aa).

11 consecutive transmembrane segments (helical) span residues 30–50, 61–81, 107–127, 134–154, 167–187, 209–231, 255–275, 294–314, 344–364, 365–385, and 401–421; these read LLPF…PGNF, GYML…IQSL, IGLW…EFIG, LLFG…SFAI, AGIA…TFFA, VLLA…HSAL, ILIA…VAAA, FGHL…LVAG, FITI…TTAL, VLSQ…LIMF, and ITVV…FLIV.

It belongs to the NRAMP family.

The protein resides in the cell membrane. Its function is as follows. H(+)-stimulated, divalent metal cation uptake system. Involved in manganese uptake. Can probably also transport cadmium, cobalt, copper and zinc, but not iron. May be the predominant transporter of manganese during logarithmic phase growth. The protein is Divalent metal cation transporter MntH of Bacillus subtilis (strain 168).